The chain runs to 109 residues: Nucleoid-associated protein Sama_1311 (109 aa).

It belongs to the YbaB/EbfC family. In terms of assembly, homodimer.

It localises to the cytoplasm. The protein localises to the nucleoid. Its function is as follows. Binds to DNA and alters its conformation. May be involved in regulation of gene expression, nucleoid organization and DNA protection. The chain is Nucleoid-associated protein Sama_1311 from Shewanella amazonensis (strain ATCC BAA-1098 / SB2B).